The primary structure comprises 91 residues: MGPPRRVCRAGLLFVLLVALAAGDAGPRGEPPGEEGGRDGIGGARCETQNTGQMSAPGALVPFYVGMASMGVCIIAHVCQICQRLLAAGHA.

A signal peptide spans 1-23 (MGPPRRVCRAGLLFVLLVALAAG). Residues 23-48 (GDAGPRGEPPGEEGGRDGIGGARCET) form a disordered region. Residues 24–55 (DAGPRGEPPGEEGGRDGIGGARCETQNTGQMS) lie on the Virion surface side of the membrane. Residues 56-76 (APGALVPFYVGMASMGVCIIA) form a helical membrane-spanning segment. Residues 77–91 (HVCQICQRLLAAGHA) lie on the Intravirion side of the membrane.

Belongs to the herpesviridae glycoprotein N family. Interacts (via N-terminus) with gM (via N-terminus). The gM-gN heterodimer forms the gCII complex.

It localises to the virion membrane. Its subcellular location is the host membrane. The protein resides in the host Golgi apparatus. It is found in the host trans-Golgi network. Envelope glycoprotein necessary for proper maturation of gM and modulation of its membrane fusion activity. Also plays a critical role in virion morphogenesis. In Homo sapiens (Human), this protein is Envelope glycoprotein N.